The following is a 420-amino-acid chain: MEEVEVAEVKNARVSLTGEKTKPMKLAEVTSINVNRTKTEMEEFNRVLGGGVVPGSLVLIGGDPGIGKSTLLLQVSTQLSQVGTVLYVSGEESAQQIKLRAERLGDIDSEFYLYAETNMQSVRAEVERIQPDFLIIDSIQTIMSPEISGVQGSVSQVREVTAELMQLAKTNNIAIFIVGHVTKEGTLAGPRMLEHMVDTVLYFEGERHHTFRILRAVKNRFGSTNEIGIFEMQSGGLVEVLNPSQVFLEERLDGATGSSIVVTMEGTRPILAEVQALVTPTMFGNAKRTTTGLDFNRASLIMAVLEKRAGLLLQNQDAYLKSAGGVKLDEPAIDLAVAVAIASSYKDKPTNPQECFVGELGLTGEIRRVNRIEQRINEAAKLGFTKIYVPKNSLTGITLPKEIQVIGVTTIQEVLKKVFA.

62–69 (GDPGIGKS) lines the ATP pocket. The RadA KNRFG motif signature appears at 218–222 (KNRFG). Residues 317 to 420 (DAYLKSAGGV…IQEVLKKVFA (104 aa)) are lon-protease-like.

The protein belongs to the RecA family. RadA subfamily.

Plays a role in repairing double-strand DNA breaks, probably involving stabilizing or processing branched DNA or blocked replication forks. Required for efficient transformation with chromosomal (linear) DNA, but not for replicative plasmid DNA. Its increased sensitivity to a DNA damaging agent suggests it may be required for DNA repair. The chain is DNA repair protein RadA from Streptococcus pneumoniae (strain ATCC BAA-255 / R6).